We begin with the raw amino-acid sequence, 233 residues long: Cytidylate kinase (233 aa).

15–23 (GPSGAGKSS) is an ATP binding site.

It belongs to the cytidylate kinase family. Type 1 subfamily.

It localises to the cytoplasm. It catalyses the reaction CMP + ATP = CDP + ADP. The catalysed reaction is dCMP + ATP = dCDP + ADP. In Citrifermentans bemidjiense (strain ATCC BAA-1014 / DSM 16622 / JCM 12645 / Bem) (Geobacter bemidjiensis), this protein is Cytidylate kinase.